The sequence spans 268 residues: Tryptophan synthase alpha chain (268 aa).

Catalysis depends on proton acceptor residues Glu49 and Asp60.

It belongs to the TrpA family. In terms of assembly, tetramer of two alpha and two beta chains.

It catalyses the reaction (1S,2R)-1-C-(indol-3-yl)glycerol 3-phosphate + L-serine = D-glyceraldehyde 3-phosphate + L-tryptophan + H2O. It functions in the pathway amino-acid biosynthesis; L-tryptophan biosynthesis; L-tryptophan from chorismate: step 5/5. In terms of biological role, the alpha subunit is responsible for the aldol cleavage of indoleglycerol phosphate to indole and glyceraldehyde 3-phosphate. The protein is Tryptophan synthase alpha chain of Escherichia coli O17:K52:H18 (strain UMN026 / ExPEC).